The following is a 975-amino-acid chain: Translation initiation factor IF-2 (975 aa).

Basic and acidic residues-rich tracts occupy residues aspartate 48–lysine 63 and alanine 120–alanine 177. Disordered stretches follow at residues aspartate 48 to threonine 85 and lysine 98 to proline 390. Residues lysine 178 to glutamine 211 show a composition bias toward low complexity. A compositionally biased stretch (basic and acidic residues) spans aspartate 212–arginine 263. The segment covering lysine 302 to glycine 330 has biased composition (low complexity). Residues serine 359–lysine 372 show a composition bias toward gly residues. The 170-residue stretch at proline 475 to lysine 644 folds into the tr-type G domain. The tract at residues glycine 484–threonine 491 is G1. Glycine 484–threonine 491 contacts GTP. The segment at glycine 509–histidine 513 is G2. Residues aspartate 530–glycine 533 form a G3 region. Residues aspartate 530–histidine 534 and asparagine 584–aspartate 587 each bind GTP. The interval asparagine 584–aspartate 587 is G4. A G5 region spans residues serine 620–lysine 622.

This sequence belongs to the TRAFAC class translation factor GTPase superfamily. Classic translation factor GTPase family. IF-2 subfamily.

It localises to the cytoplasm. One of the essential components for the initiation of protein synthesis. Protects formylmethionyl-tRNA from spontaneous hydrolysis and promotes its binding to the 30S ribosomal subunits. Also involved in the hydrolysis of GTP during the formation of the 70S ribosomal complex. This is Translation initiation factor IF-2 from Burkholderia pseudomallei (strain 1106a).